The sequence spans 364 residues: Oxidized low-density lipoprotein receptor 1 (364 aa).

Residues 1–21 (MAFDDKMKPVNGQPDQKSCGK) form a disordered region. The Cytoplasmic segment spans residues 1 to 31 (MAFDDKMKPVNGQPDQKSCGKKPKGLHLLSS). A helical; Signal-anchor for type II membrane protein transmembrane segment spans residues 32–54 (TWWCPAAVTLAILCLVLSVTLIV). Residues Cys-35 and Cys-45 are each lipidated (S-palmitoyl cysteine). Residues 55-242 (QQTQLLQVSD…GPCPQDWIWH (188 aa)) are neck. Topologically, residues 55-364 (QQTQLLQVSD…QKKANLLLTQ (310 aa)) are extracellular. Asn-72, Asn-92, and Asn-138 each carry an N-linked (GlcNAc...) asparagine glycan. Residues 83–233 (QMSAQKKAEN…ALQRAANSSG (151 aa)) are a coiled coil. Repeat copies occupy residues 96–141 (ESKR…NASE), 142–187 (ESKW…KYSE), and 188–233 (ESQR…NSSG). Disulfide bonds link Cys-235–Cys-246, Cys-262–Cys-354, and Cys-333–Cys-346. In terms of domain architecture, C-type lectin spans 242 to 355 (HKENCYLFHG…CILTAFSICQ (114 aa)).

As to quaternary structure, homodimer; disulfide-linked. May form a hexamer composed of 3 homodimers. Interacts with HSP70. Post-translationally, N-glycosylated. Predominantly expressed in lung and at lower level in kidney. Expressed in macrophages but not in vascular smooth muscle cells.

The protein resides in the cell membrane. The protein localises to the membrane raft. Its subcellular location is the secreted. Receptor that mediates the recognition, internalization and degradation of oxidatively modified low density lipoprotein (oxLDL) by vascular endothelial cells. OxLDL is a marker of atherosclerosis that induces vascular endothelial cell activation and dysfunction, resulting in pro-inflammatory responses, pro-oxidative conditions and apoptosis. Its association with oxLDL induces the activation of NF-kappa-B through an increased production of intracellular reactive oxygen and a variety of pro-atherogenic cellular responses including a reduction of nitric oxide (NO) release, monocyte adhesion and apoptosis. In addition to binding oxLDL, it acts as a receptor for the HSP70 protein involved in antigen cross-presentation to naive T-cells in dendritic cells, thereby participating in cell-mediated antigen cross-presentation. Also involved in inflammatory process, by acting as a leukocyte-adhesion molecule at the vascular interface in endotoxin-induced inflammation. Also acts as a receptor for advanced glycation end (AGE) products, activated platelets, monocytes, apoptotic cells and both Gram-negative and Gram-positive bacteria. The polypeptide is Oxidized low-density lipoprotein receptor 1 (Olr1) (Rattus norvegicus (Rat)).